A 303-amino-acid polypeptide reads, in one-letter code: Lipase chaperone (303 aa).

Residues 7 to 23 (TLAAACAAWLAWWAWPD) form a helical membrane-spanning segment.

This sequence belongs to the lipase chaperone family.

Its subcellular location is the cell inner membrane. Functionally, may be involved in the folding of the extracellular lipase during its passage through the periplasm. The protein is Lipase chaperone (lifO) of Chromobacterium violaceum (strain ATCC 12472 / DSM 30191 / JCM 1249 / CCUG 213 / NBRC 12614 / NCIMB 9131 / NCTC 9757 / MK).